A 930-amino-acid chain; its full sequence is Protein translocase subunit SecA (930 aa).

ATP contacts are provided by residues glutamine 87, 105 to 109 (GEGKT), and aspartate 515. Zn(2+) is bound by residues cysteine 914, cysteine 916, cysteine 925, and histidine 926.

It belongs to the SecA family. In terms of assembly, monomer and homodimer. Part of the essential Sec protein translocation apparatus which comprises SecA, SecYEG and auxiliary proteins SecDF-YajC and YidC. It depends on Zn(2+) as a cofactor.

The protein localises to the cell inner membrane. The protein resides in the cytoplasm. The enzyme catalyses ATP + H2O + cellular proteinSide 1 = ADP + phosphate + cellular proteinSide 2.. Part of the Sec protein translocase complex. Interacts with the SecYEG preprotein conducting channel. Has a central role in coupling the hydrolysis of ATP to the transfer of proteins into and across the cell membrane, serving both as a receptor for the preprotein-SecB complex and as an ATP-driven molecular motor driving the stepwise translocation of polypeptide chains across the membrane. This Burkholderia vietnamiensis (strain G4 / LMG 22486) (Burkholderia cepacia (strain R1808)) protein is Protein translocase subunit SecA.